We begin with the raw amino-acid sequence, 1165 residues long: ATP-dependent helicase/deoxyribonuclease subunit B (1165 aa).

The region spanning 1 to 324 (MRFIIGGAGS…LVEAQNRREE (324 aa)) is the UvrD-like helicase ATP-binding domain. 6 to 13 (GGAGSGKS) is an ATP binding site. One can recognise a UvrD-like helicase C-terminal domain in the interval 282-597 (PLRFRGAPEL…IVGTVERSRH (316 aa)). Positions 803, 1121, 1124, and 1130 each coordinate [4Fe-4S] cluster.

It belongs to the helicase family. AddB/RexB type 1 subfamily. Heterodimer of AddA and AddB. Mg(2+) is required as a cofactor. It depends on [4Fe-4S] cluster as a cofactor.

Its function is as follows. The heterodimer acts as both an ATP-dependent DNA helicase and an ATP-dependent, dual-direction single-stranded exonuclease. Recognizes the chi site generating a DNA molecule suitable for the initiation of homologous recombination. The AddB subunit has 5' -&gt; 3' nuclease activity but not helicase activity. The polypeptide is ATP-dependent helicase/deoxyribonuclease subunit B (Symbiobacterium thermophilum (strain DSM 24528 / JCM 14929 / IAM 14863 / T)).